Here is a 343-residue protein sequence, read N- to C-terminus: Sodium/bile acid cotransporter 7-B (343 aa).

Residues 1–9 (MGLLERLRK) lie on the Cytoplasmic side of the membrane. A helical transmembrane segment spans residues 10–30 (EWFIIGIILVIVAAKLEPTIG). The Extracellular portion of the chain corresponds to 31–37 (EKGGPLK). A helical membrane pass occupies residues 38–58 (PEITITYIAVSAIFFNSGLSL). Over 59 to 71 (KTEELTNALMHVK) the chain is Cytoplasmic. Residues 72–92 (LHLFVQLFTLVFFPTAIWIFL) form a helical membrane-spanning segment. The Extracellular segment spans residues 93–116 (QVLSLTPINEWLLKGLQTVSCMPP). Residues 117–137 (PVSSAVILTKAVGGNEAAAIF) form a helical membrane-spanning segment. Asn138 is a topological domain (cytoplasmic). A helical membrane pass occupies residues 139 to 159 (SAFGSFLGIVVTPLLLLLFLG). Residues 160 to 163 (SSSS) are Extracellular-facing. The helical transmembrane segment at 164–184 (VPFTSIFSQLFMTVVVPLIIG) threads the bilayer. Residues 185–201 (QIVRRYIKDWLERKKPP) are Cytoplasmic-facing. Residues 202 to 222 (FGAISSCVLLMIIYTTFCDTF) traverse the membrane as a helical segment. At 223–234 (SNPNIDLDTFSL) the chain is on the extracellular side. Residues 235–255 (VVIVFIIFFIQLAFMLLTFLF) form a helical membrane-spanning segment. Topologically, residues 256 to 270 (STSKNSGFTPADTVA) are cytoplasmic. Residues 271-291 (IVFCSTHKSLTLGIPMLKIVF) form a helical membrane-spanning segment. Topologically, residues 292–298 (AGYEHLS) are extracellular. A helical transmembrane segment spans residues 299-319 (LISVPLLIYHPAQILLGSVLV). The Cytoplasmic portion of the chain corresponds to 320–343 (PTIKSWMLSRRKALKLTRQPKIPL).

It belongs to the bile acid:sodium symporter (BASS) (TC 2.A.28) family.

It is found in the cell membrane. The protein resides in the endoplasmic reticulum membrane. It localises to the golgi apparatus membrane. Functionally, involved in teeth and skeletal development. Has an essential role in the biosynthesis and trafficking of glycosaminoglycans and glycoproteins to produce a proper functioning extracellular matrix. Required for extracellular matrix mineralization. Also involved in the regulation of cellular calcium homeostasis. Does not show transport activity towards bile acids or steroid sulfates. This chain is Sodium/bile acid cotransporter 7-B (slc10a7-b), found in Xenopus laevis (African clawed frog).